Here is a 62-residue protein sequence, read N- to C-terminus: uncharacterized protein (62 aa).

The interval 38–62 (VKSESDTADSKRSAEAKADEAPAKM) is disordered.

This is an uncharacterized protein from Schizosaccharomyces pombe (strain 972 / ATCC 24843) (Fission yeast).